A 778-amino-acid polypeptide reads, in one-letter code: Protein PHOTOPERIODIC CONTROL OF HYPOCOTYL 1 (778 aa).

Disordered stretches follow at residues 74–95, 186–283, and 316–335; these read QKRETTTTTTTKPSFHEDVGSS, HNRG…NSAT, and KTSPSDSSETKSMMKMKEAS. Positions 198 to 212 are enriched in basic and acidic residues; it reads SSKDTQEDGPRKNES. A compositionally biased stretch (low complexity) spans 230–247; it reads SGSISSSSTKGKGIKGYS. Basic and acidic residues predominate over residues 265 to 275; the sequence is PDRENSVDGHQ. The segment covering 317–326 has biased composition (polar residues); the sequence is TSPSDSSETK. The F-box domain maps to 470–505; the sequence is WPLLPNDLLELIMGHLETSFEIFLFRSVCSSWRSVV.

As to quaternary structure, interacts with light-activated phyB. Binds directly to PIF1 and COP1. In terms of processing, ubiquitinated by COP1 in darkness; this leads to proteasomal degradation. In terms of tissue distribution, mainly expressed in cotyledons, hypocotyls, leaves and roots.

The protein localises to the nucleus. Together with PCHL, regulates growth and development adaptation to the ambient environment by controlling negatively phytochrome B (phyB) dark reversion, a temperature-dependent thermal relaxation process during which phyB reverts from the active to the inactive state. Contributes to red (R) light-triggered photomorphogenesis. Promotes various light responses such as seed germination, hypocotyl gravitropism and chlorophyll biosynthesis, via direct interaction with PIF1 and COP1. Prevents DNA-binding ability of PIF1 to negatively regulate the expressions of its target genes. Facilitates the physical interaction between phyB and PIF1 and the subsequent light-induced degradation of PIF1. The polypeptide is Protein PHOTOPERIODIC CONTROL OF HYPOCOTYL 1 (Arabidopsis thaliana (Mouse-ear cress)).